Here is a 209-residue protein sequence, read N- to C-terminus: Type III pantothenate kinase (209 aa).

Residue 5 to 12 (DIGNSNAN) coordinates ATP. Residues Tyr68 and 72–75 (GIDR) each bind substrate. Asp74 acts as the Proton acceptor in catalysis. A K(+)-binding site is contributed by Asp89. ATP is bound at residue Ser92. Position 144 (Thr144) interacts with substrate.

It belongs to the type III pantothenate kinase family. In terms of assembly, homodimer. NH4(+) is required as a cofactor. Requires K(+) as cofactor.

The protein resides in the cytoplasm. It carries out the reaction (R)-pantothenate + ATP = (R)-4'-phosphopantothenate + ADP + H(+). It functions in the pathway cofactor biosynthesis; coenzyme A biosynthesis; CoA from (R)-pantothenate: step 1/5. Catalyzes the phosphorylation of pantothenate (Pan), the first step in CoA biosynthesis. The chain is Type III pantothenate kinase from Campylobacter jejuni (strain RM1221).